The chain runs to 117 residues: Transcription elongation factor A protein-like 8 (117 aa).

2 stretches are compositionally biased toward basic and acidic residues: residues 1-24 (MQKS…DRPL) and 61-74 (YKED…DPEE). Residues 1-74 (MQKSCGENER…SPVRHLDPEE (74 aa)) form a disordered region. The stretch at 73-100 (EEMIRGADELERLREEIRRVRNKFVMMH) forms a coiled coil.

The protein belongs to the TFS-II family. TFA subfamily.

The protein localises to the nucleus. May be involved in transcriptional regulation. In Bos taurus (Bovine), this protein is Transcription elongation factor A protein-like 8 (TCEAL8).